The following is a 124-amino-acid chain: uncharacterized protein (124 aa).

Residues 73–94 (CEETGAPIPLAKLAVLPTARTA) form a dksA C4-type; degenerate zinc finger.

This is an uncharacterized protein from Bacillus subtilis (strain 168).